Consider the following 352-residue polypeptide: Phosphoribosylformylglycinamidine cyclo-ligase (352 aa).

This sequence belongs to the AIR synthase family.

Its subcellular location is the cytoplasm. The catalysed reaction is 2-formamido-N(1)-(5-O-phospho-beta-D-ribosyl)acetamidine + ATP = 5-amino-1-(5-phospho-beta-D-ribosyl)imidazole + ADP + phosphate + H(+). It functions in the pathway purine metabolism; IMP biosynthesis via de novo pathway; 5-amino-1-(5-phospho-D-ribosyl)imidazole from N(2)-formyl-N(1)-(5-phospho-D-ribosyl)glycinamide: step 2/2. The polypeptide is Phosphoribosylformylglycinamidine cyclo-ligase (Hahella chejuensis (strain KCTC 2396)).